The sequence spans 405 residues: Aspartokinase (405 aa).

ACT domains follow at residues 267 to 344 (VSME…AKVS) and 345 to 405 (IVGV…QLDQ).

It belongs to the aspartokinase family.

It carries out the reaction L-aspartate + ATP = 4-phospho-L-aspartate + ADP. It participates in amino-acid biosynthesis; L-lysine biosynthesis via DAP pathway; (S)-tetrahydrodipicolinate from L-aspartate: step 1/4. Its pathway is amino-acid biosynthesis; L-methionine biosynthesis via de novo pathway; L-homoserine from L-aspartate: step 1/3. The protein operates within amino-acid biosynthesis; L-threonine biosynthesis; L-threonine from L-aspartate: step 1/5. The chain is Aspartokinase (lysC) from Helicobacter pylori (strain ATCC 700392 / 26695) (Campylobacter pylori).